The following is a 2514-amino-acid chain: Polyprotein P1234 (2514 aa).

The region spanning 28–259 (EPKQVTPNDH…ESRKLLQSWH (232 aa)) is the Alphavirus-like MT domain. The nsP1 membrane-binding stretch occupies residues 244–263 (GSTLYPESRKLLQSWHLPSV). S-palmitoyl cysteine; by host attachment occurs at residues cysteine 417 and cysteine 419. The (+)RNA virus helicase ATP-binding domain occupies 690-842 (DLTSPPYHEF…HNICTQVYHK (153 aa)). Residue 721-728 (GVPGSGKS) participates in a ribonucleoside 5'-triphosphate binding. The (+)RNA virus helicase C-terminal domain occupies 843–991 (SISRRCTLPV…IKEWEAEHAS (149 aa)). Residues 1004–1327 (DTFQNKANVC…NQLNAVYAGL (324 aa)) form the Peptidase C9 domain. Residues 1005-1024 (TFQNKANVCWAKCLVPILDT) form a nucleolus localization signal region. The For cysteine protease nsP2 activity role is filled by cysteine 1013. The short motif at 1058 to 1067 (TRIYGVDLDS) is the Nuclear export signal element. The For cysteine protease nsP2 activity role is filled by histidine 1083. Residues 1182 to 1186 (PTKRV) carry the Nuclear localization signal motif. Residues 1334–1493 (APSYRVKRMD…KITEAISLRS (160 aa)) form the Macro domain. Residues aspartate 1343, asparagine 1357, glycine 1365, glycine 1445, valine 1446, and tyrosine 1447 each coordinate ADP-D-ribose. 4 residues coordinate Zn(2+): cysteine 1595, cysteine 1597, cysteine 1620, and cysteine 1638. 2 consecutive short sequence motifs (FGDF; binding to host G3BP1) follow at residues 1852–1855 (FGDF) and 1870–1873 (FGDF). The 116-residue stretch at 2268–2383 (DAVLETDIAS…HGVVSDALMA (116 aa)) folds into the RdRp catalytic domain.

Interacts with non-structural protein 3. Interacts with RNA-directed RNA polymerase nsP4. Interacts with protease nsP2. interacts with itself. As to quaternary structure, interacts with mRNA-capping enzyme nsP1. Interacts with host DDX1. Interacts with host DDX3. Interacts (via C-terminus) with host G3BP1; this interaction inhibits the formation of host stress granules on viral mRNAs and the nsp3-G3BP1 complexes bind viral RNAs and probably orchestrate the assembly of viral replication complexes. Interacts (via C-terminus) with host G3BP2; this interaction inhibits the formation of host stress granules on viral mRNAs and the nsp3-G3BP2 complexes bind viral RNAs and probably orchestrate the assembly of viral replication complexes. In terms of assembly, interacts with mRNA-capping enzyme nsP1. Interacts with protease nsP2. interacts with itself. Interacts with RNA-directed RNA polymerase nsP4. Interacts with mRNA-capping enzyme nsP1. Interacts with KPNA1/karyopherin-alpha1; this interaction probably allows the active transport of protease nsP2 into the host nucleus. It depends on Mg(2+) as a cofactor. Requires Mn(2+) as cofactor. Post-translationally, specific enzymatic cleavages in vivo yield mature proteins. The processing of the polyprotein is temporally regulated. In early stages (1.7 hpi), P1234 is first cleaved in trans through its nsP2 protease activity, releasing P123 and nsP4, which associate to form the early replication complex. At the same time, P1234 is also cut at the nsP1/nsP2 site early in infection but with lower efficiency. After replication of the viral minus-strand RNAs (4 hpi), the polyproteins are cut at the nsP1/nsP2 and nsP2/nsP3 sites very efficiently, preventing accumulation of P123 and P1234 and allowing the formation of the late replication complex. NsP3/nsP4 site is not cleaved anymore and P34 is produced rather than nsP4. Specific enzymatic cleavages in vivo yield mature proteins. The processing of the polyprotein is temporally regulated. In early stages (1.7 hpi), P123 is cleaved at the nsP1/nsP2 site with low efficiency. After replication of the viral minus-strand RNAs (4 hpi), the polyproteins are cut at the nsP1/nsP2 and nsP2/nsP3 sites very efficiently, preventing accumulation of P123 and allowing the formation of the late replication complex. In terms of processing, palmitoylated by host palmitoyltransferases ZDHHC2 and ZDHHC19. Post-translationally, phosphorylated by host on serines and threonines. Ubiquitinated; targets the protein for rapid degradation via the ubiquitin system. Nsp4 is present in extremely low quantities due to low frequency of translation through the amber stop-codon and the degradation by the ubiquitin pathway.

The protein localises to the host cytoplasmic vesicle membrane. It localises to the host cell membrane. It is found in the host cell projection. The protein resides in the host filopodium. Its subcellular location is the host nucleus. The protein localises to the host cytoplasm. It carries out the reaction GTP + S-adenosyl-L-methionine = N(7)-methyl-GTP + S-adenosyl-L-homocysteine. The enzyme catalyses N(7)-methyl-GTP + L-histidyl-[protein] = N(tele)-(N(7)-methylguanosine 5'-phospho)-L-histidyl-[protein] + diphosphate. The catalysed reaction is N(tele)-(N(7)-methylguanosine 5'-phospho)-L-histidyl-[protein] + a 5'-end diphospho-(purine-ribonucleoside) in mRNA + H(+) = a 5'-end (N(7)-methyl 5'-triphosphoguanosine)-(purine-ribonucleoside) in mRNA + L-histidyl-[protein]. It catalyses the reaction a 5'-end triphospho-ribonucleoside in mRNA + H2O = a 5'-end diphospho-ribonucleoside in mRNA + phosphate + H(+). It carries out the reaction a ribonucleoside 5'-triphosphate + H2O = a ribonucleoside 5'-diphosphate + phosphate + H(+). The enzyme catalyses ATP + H2O = ADP + phosphate + H(+). The catalysed reaction is RNA(n) + a ribonucleoside 5'-triphosphate = RNA(n+1) + diphosphate. It catalyses the reaction 4-O-(ADP-D-ribosyl)-L-aspartyl-[protein] + H2O = L-aspartyl-[protein] + ADP-D-ribose + H(+). It carries out the reaction 5-O-(ADP-D-ribosyl)-L-glutamyl-[protein] + H2O = L-glutamyl-[protein] + ADP-D-ribose + H(+). The enzyme catalyses RNA(n) + ATP = RNA(n)-3'-adenine ribonucleotide + diphosphate. The catalysed reaction is ADP-alpha-D-ribose 1''-phosphate + H2O = ADP-D-ribose + phosphate. Inactive precursor of the viral replicase, which is activated by cleavages carried out by the viral protease nsP2. Its function is as follows. The early replication complex formed by the polyprotein P123 and nsP4 synthesizes minus-strand RNAs. As soon P123 is cleaved into mature proteins, the plus-strand RNAs synthesis begins. In terms of biological role, cytoplasmic capping enzyme that catalyzes two virus-specific reactions: methyltransferase and nsP1 guanylyltransferase. mRNA-capping is necessary since all viral RNAs are synthesized in the cytoplasm, and host capping enzymes are restricted to the nucleus. The enzymatic reaction involves a covalent link between 7-methyl-GMP and nsP1, whereas eukaryotic capping enzymes form a covalent complex only with GMP. nsP1 capping consists in the following reactions: GTP is first methylated into 7-methyl-GMP and then is covalently linked to nsP1 to form the m7GMp-nsP1 complex from which 7-methyl-GMP complex is transferred to the mRNA to create the cap structure. NsP1 is also needed for the initiation of the minus-strand RNAs synthesis. Probably serves as a membrane anchor for the replication complex composed of nsP1-nsP4. Palmitoylated nsP1 is remodeling host cell cytoskeleton, and induces filopodium-like structure formation at the surface of the host cell. Functionally, multifunctional protein whose N-terminus is part of the RNA polymerase complex and displays NTPase, RNA triphosphatase and helicase activities. NTPase and RNA triphosphatase are involved in viral RNA capping and helicase keeps a check on the dsRNA replication intermediates. The C-terminus harbors a protease that specifically cleaves the polyproteins and releases the mature proteins. Required for the shutoff of minus-strand RNAs synthesis. Specifically inhibits the host IFN response by promoting the nuclear export of host STAT1. Also inhibits host transcription by inducing the rapid proteasome-dependent degradation of POLR2A, a catalytic subunit of the RNAPII complex. The resulting inhibition of cellular protein synthesis serves to ensure maximal viral gene expression and to evade host immune response. Seems to be essential for minus-strand RNAs and subgenomic 26S mRNAs synthesis. Displays mono-ADP-ribosylhydrolase activity. ADP-ribosylation is a post-translational modification that controls various processes of the host cell and the virus probably needs to revert it for optimal viral replication. Binds proteins of G3BP family and sequesters them into the viral RNA replication complexes thereby inhibiting the formation of host stress granules on viral mRNAs. The nsp3-G3BP complexes bind viral RNAs and probably orchestrate the assembly of viral replication complexes, thanks to the ability of G3BP family members to self-assemble and bind DNA. Its function is as follows. RNA dependent RNA polymerase. Replicates genomic and antigenomic RNA by recognizing replications specific signals. The early replication complex formed by the polyprotein P123 and nsP4 synthesizes minus-strand RNAs. The late replication complex composed of fully processed nsP1-nsP4 is responsible for the production of genomic and subgenomic plus-strand RNAs. In O'nyong-nyong virus (strain Gulu) (ONNV), this protein is Polyprotein P1234.